A 488-amino-acid polypeptide reads, in one-letter code: MSIRHCVAVDLGASSGRVMLASYQSGPRALTLREIHRFTNSLQKVDGFDCWDVDSLEGEIRRGLEKVCEQGILIDSIGIDTWGVDYVLLDKQGQRVGLPISYRDDRTQGLLRHAEEQLGRAEIYRRSGIQFLPFNTLYQLRALVEQQPELVSQAAHALLIPDYFSFRLTGNLNWEYTNATTTQLVNINSDSWDETLLNWTGAPLAWFGTPTHPGNVIGHWICPQGNRIPVVAVASHDTASAVIASPLADRHAAYLSSGTWSLMGFESLTPYTCDAALQANITNEGGAEGRYRVLKNIMGLWLLQRVLKEQHVSDLQGLIARTAALPACRFMIDCNDDRFINPASMSAEIQAACRDAGQPVPESDAELARCIFDSLALLYARVLNELAALRGQPFSQLHIVGGGCQNALLNQLCADACGIAVVAGPIEASTLGNIGIQLMTLDELANVDEFRQVVRDNAALTAFTPNPDSEIARFVAQFQPQQTKELCA.

13–17 (ASSGR) contacts ATP. An intrachain disulfide couples Cys68 to Cys222. Residues Gly83 and 236–238 (HDT) each bind substrate. The active-site Proton acceptor is the Asp237. Thr259 provides a ligand contact to ATP. Asn296 is a substrate binding site. ATP is bound at residue Gln304. Residues Cys353 and Cys370 are joined by a disulfide bond. Residue Gly402 participates in ATP binding. Cys413 and Cys417 are oxidised to a cystine.

Belongs to the rhamnulokinase family. Requires Mg(2+) as cofactor.

It catalyses the reaction L-rhamnulose + ATP = L-rhamnulose 1-phosphate + ADP + H(+). It functions in the pathway carbohydrate degradation; L-rhamnose degradation; glycerone phosphate from L-rhamnose: step 2/3. Involved in the catabolism of L-rhamnose (6-deoxy-L-mannose). Catalyzes the transfer of the gamma-phosphate group from ATP to the 1-hydroxyl group of L-rhamnulose to yield L-rhamnulose 1-phosphate. The chain is Rhamnulokinase from Klebsiella pneumoniae (strain 342).